Reading from the N-terminus, the 320-residue chain is Tabersonine synthase (320 aa).

Positions 78–80 (HGA) match the Involved in the stabilization of the negatively charged intermediate by the formation of the oxyanion hole motif. Residue G81 participates in (-)-tabersonine binding. S170 serves as the catalytic Proton acceptor. The active site involves D266. Y297 provides a ligand contact to (-)-tabersonine. Y297 serves as the catalytic Proton donor/acceptor.

Belongs to the 'GDXG' lipolytic enzyme family. In terms of assembly, interacts with dehydroprecondylocarpine acetate synthase (DPAS). As to expression, expressed in leaf epidermis.

It localises to the cytoplasm. The protein resides in the cytosol. Its subcellular location is the nucleus. The catalysed reaction is dehydrosecodine = (-)-tabersonine. It carries out the reaction dihydroprecondylocarpine acetate = (-)-tabersonine + acetate + H(+). It functions in the pathway alkaloid biosynthesis. Component of iboga and aspidosperma monoterpenoid indole alkaloids (MIAs, e.g. tabersonine and catharanthine) biosynthesis pathway from 19E-geissoschizine, psychoactive compounds likely to be used in the treatment of opioid dependence. Catalyzes the conversion of dehydrosecodine to tabersonine, a precursor of vindoline; this process starts with the conversion of dihydroprecondylocarpine acetate to dehydrosecodine. This chain is Tabersonine synthase, found in Catharanthus roseus (Madagascar periwinkle).